Consider the following 102-residue polypeptide: Small ribosomal subunit protein bS18 (102 aa).

Belongs to the bacterial ribosomal protein bS18 family. In terms of assembly, part of the 30S ribosomal subunit. Forms a tight heterodimer with protein bS6.

Functionally, binds as a heterodimer with protein bS6 to the central domain of the 16S rRNA, where it helps stabilize the platform of the 30S subunit. The sequence is that of Small ribosomal subunit protein bS18 from Orientia tsutsugamushi (strain Ikeda) (Rickettsia tsutsugamushi).